We begin with the raw amino-acid sequence, 151 residues long: Probable cGMP 3',5'-cyclic phosphodiesterase subunit delta (151 aa).

It belongs to the PDE6D/unc-119 family. As to quaternary structure, interacts with Pde6.

Its subcellular location is the nucleus. It is found in the cytoplasm. This Drosophila virilis (Fruit fly) protein is Probable cGMP 3',5'-cyclic phosphodiesterase subunit delta.